A 241-amino-acid chain; its full sequence is Glucosamine-6-phosphate deaminase (241 aa).

The active-site Proton acceptor; for enolization step is the D67. The For ring-opening step role is filled by N136. The Proton acceptor; for ring-opening step role is filled by H138. E143 (for ring-opening step) is an active-site residue.

The protein belongs to the glucosamine/galactosamine-6-phosphate isomerase family. NagB subfamily.

The catalysed reaction is alpha-D-glucosamine 6-phosphate + H2O = beta-D-fructose 6-phosphate + NH4(+). It functions in the pathway amino-sugar metabolism; N-acetylneuraminate degradation; D-fructose 6-phosphate from N-acetylneuraminate: step 5/5. Its function is as follows. Catalyzes the reversible isomerization-deamination of glucosamine 6-phosphate (GlcN6P) to form fructose 6-phosphate (Fru6P) and ammonium ion. This is Glucosamine-6-phosphate deaminase from Alkaliphilus oremlandii (strain OhILAs) (Clostridium oremlandii (strain OhILAs)).